The sequence spans 238 residues: Lactate utilization protein A (238 aa).

This sequence belongs to the LutA/YkgE family.

Functionally, is involved in L-lactate degradation and allows cells to grow with lactate as the sole carbon source. The sequence is that of Lactate utilization protein A from Anoxybacillus flavithermus (strain DSM 21510 / WK1).